The primary structure comprises 367 residues: MYPPPPSSIYAPPMLVNCSGCRTPLQLPSGARSIRCALCQAVTHIADPRTAPPPQPSSAPSPPPQIHAPPGQLPHPHGRKRAVICGISYRFSRHELKGCINDAKCMRHLLINKFKFSPDSILMLTEEETDPYRIPTKQNMRMALYWLVQGCTAGDSLVFHYSGHGSRQRNYNGDEVDGYDETLCPLDFETQGMIVDDEINATIVRPLPHGVKLHSIIDACHSGTVLDLPFLCRMNRAGQYVWEDHRPRSGLWKGTAGGEAISISGCDDDQTSADTSALSKITSTGAMTFCFIQAIERSAQGTTYGSLLNSMRTTIRNTGNDGGGSGGVVTTVLSMLLTGGSAIGGLRQEPQLTACQTFDVYAKPFTL.

Positions 47-77 are disordered; that stretch reads DPRTAPPPQPSSAPSPPPQIHAPPGQLPHPH. Pro residues predominate over residues 50-73; that stretch reads TAPPPQPSSAPSPPPQIHAPPGQL. Residues His164 and Cys220 contribute to the active site.

It belongs to the peptidase C14B family. As to quaternary structure, interacts (via N-terminus) with LSD1. Proteolytically processed; by an autocatalytic mechanism.

Cysteine protease that cleaves specifically after arginine or lysine residues. Does not cleave caspase-specific substrates. Acts as a positive regulator of cell death. Required for both oxidative stress cell death response and hypersensitive cell death response mediated by immune response. This chain is Metacaspase-1 (AMC1), found in Arabidopsis thaliana (Mouse-ear cress).